We begin with the raw amino-acid sequence, 182 residues long: ATP-dependent protease subunit HslV (182 aa).

The active site involves Thr-2. Gly-157, Cys-160, and Thr-163 together coordinate Na(+).

This sequence belongs to the peptidase T1B family. HslV subfamily. As to quaternary structure, a double ring-shaped homohexamer of HslV is capped on each side by a ring-shaped HslU homohexamer. The assembly of the HslU/HslV complex is dependent on binding of ATP.

Its subcellular location is the cytoplasm. It catalyses the reaction ATP-dependent cleavage of peptide bonds with broad specificity.. Its activity is regulated as follows. Allosterically activated by HslU binding. Its function is as follows. Protease subunit of a proteasome-like degradation complex believed to be a general protein degrading machinery. The polypeptide is ATP-dependent protease subunit HslV (Sodalis glossinidius (strain morsitans)).